A 299-amino-acid polypeptide reads, in one-letter code: Transcription factor BHLH148 (299 aa).

The segment at 90–127 is disordered; sequence RMGGGGGGGEKGEGEEMEEEEEVPQRRRRGQGADVESS. The span at 102–111 shows a compositional bias: acidic residues; it reads EGEEMEEEEE. The basic motif; degenerate stretch occupies residues 127-140; that stretch reads SRGFRHMMRERQRR. The 50-residue stretch at 127-176 folds into the bHLH domain; the sequence is SRGFRHMMRERQRREKLSQSYADLYAMVSSRSKGDKNSIVQSAAIYIHEL. The segment at 141 to 176 is helix-loop-helix motif; that stretch reads EKLSQSYADLYAMVSSRSKGDKNSIVQSAAIYIHEL. Residues 273-299 are disordered; it reads ERNQPDSDAPFPGSKGWTQTSHVQNVF. The segment covering 288–299 has biased composition (polar residues); that stretch reads GWTQTSHVQNVF.

Belongs to the bHLH protein family. As to quaternary structure, interacts with TIFY10A/JAZ6, TIFY10B/JAZ7, TIFY11A/JAZ9, TIFY11C/JAZ11, and TIFY11D/JAZ12.

It is found in the nucleus. In terms of biological role, may act on an initial response of jasmonate-regulated gene expression toward drought tolerance as part of a BHLH148-TIFY11D/JAZ12-COI1A complex. The sequence is that of Transcription factor BHLH148 from Oryza sativa subsp. japonica (Rice).